Here is a 199-residue protein sequence, read N- to C-terminus: Peroxiredoxin-1 (199 aa).

In terms of domain architecture, Thioredoxin spans 6-165 (AFIGKPAPDF…TLRLVQAFQF (160 aa)). Residue C52 is the Cysteine sulfenic acid (-SOH) intermediate of the active site.

It belongs to the peroxiredoxin family. AhpC/Prx1 subfamily. Homodimer; disulfide-linked, upon oxidation. 5 homodimers assemble to form a ring-like decamer. Interacts with GDPD5; forms a mixed-disulfide with GDPD5. Interacts with SESN1 and SESN2. The enzyme can be inactivated by further oxidation of the cysteine sulfenic acid (C(P)-SOH) to sulphinic acid (C(P)-SO2H) instead of its condensation to a disulfide bond. It can be reactivated by forming a transient disulfide bond with sulfiredoxin SRXN1, which reduces the cysteine sulfinic acid in an ATP- and Mg-dependent manner.

The protein localises to the cytoplasm. It carries out the reaction a hydroperoxide + [thioredoxin]-dithiol = an alcohol + [thioredoxin]-disulfide + H2O. Thiol-specific peroxidase that catalyzes the reduction of hydrogen peroxide and organic hydroperoxides to water and alcohols, respectively. Plays a role in cell protection against oxidative stress by detoxifying peroxides and as sensor of hydrogen peroxide-mediated signaling events. Might participate in the signaling cascades of growth factors and tumor necrosis factor-alpha by regulating the intracellular concentrations of H(2)O(2). Reduces an intramolecular disulfide bond in GDPD5 that gates the ability to GDPD5 to drive postmitotic motor neuron differentiation. In Gallus gallus (Chicken), this protein is Peroxiredoxin-1 (PRDX1).